Here is a 504-residue protein sequence, read N- to C-terminus: ATP synthase subunit beta (504 aa).

The segment at 1-23 (MAKAATPKETAAAKKPAAPKKAA) is disordered. 182–189 (GGAGVGKT) contributes to the ATP binding site.

It belongs to the ATPase alpha/beta chains family. F-type ATPases have 2 components, CF(1) - the catalytic core - and CF(0) - the membrane proton channel. CF(1) has five subunits: alpha(3), beta(3), gamma(1), delta(1), epsilon(1). CF(0) has three main subunits: a(1), b(2) and c(9-12). The alpha and beta chains form an alternating ring which encloses part of the gamma chain. CF(1) is attached to CF(0) by a central stalk formed by the gamma and epsilon chains, while a peripheral stalk is formed by the delta and b chains.

It is found in the cell inner membrane. It carries out the reaction ATP + H2O + 4 H(+)(in) = ADP + phosphate + 5 H(+)(out). Produces ATP from ADP in the presence of a proton gradient across the membrane. The catalytic sites are hosted primarily by the beta subunits. In Rhizobium meliloti (strain 1021) (Ensifer meliloti), this protein is ATP synthase subunit beta.